We begin with the raw amino-acid sequence, 144 residues long: Glycine-rich protein DC9.1 (144 aa).

Residues 5 to 25 (IFLLLGLSIAFAILISSEVAA) form a helical membrane-spanning segment. A run of 11 repeats spans residues 37–42 (GYNNGG), 43–48 (GYHNGG), 50–55 (GYNNGG), 56–61 (GYHNGG), 63–68 (GYNNGG), 69–74 (GYHNGG), 76–81 (GYNNGG), 82–87 (GYHNGG), 89–94 (GYNNGG), 102–107 (GYNNGG), and 108–113 (GHHGGG). The interval 37–113 (GYNNGGGYHN…NNGGGHHGGG (77 aa)) is 11 X 6 AA tandem repeats of G-Y-[NH]-N-G -G.

This sequence belongs to the GRP family.

The protein localises to the membrane. The sequence is that of Glycine-rich protein DC9.1 from Daucus carota (Wild carrot).